Consider the following 137-residue polypeptide: Glutamate mutase sigma subunit (137 aa).

One can recognise a B12-binding domain in the interval 3–137; sequence KKTIVLGVIG…ADMKEVLGVE (135 aa). Adenosylcob(III)alamin is bound by residues 13–17, His16, 61–63, and 93–97; these read SDCHA, SSL, and NIVVG.

Belongs to the methylaspartate mutase GlmS subunit family. In terms of assembly, heterotetramer composed of 2 epsilon subunits (GlmE) and 2 sigma subunits (GlmS). GlmE exists as a homodimer and GlmS as a monomer. Adenosylcob(III)alamin is required as a cofactor.

It carries out the reaction (2S,3S)-3-methyl-L-aspartate = L-glutamate. It participates in amino-acid degradation; L-glutamate degradation via mesaconate pathway; acetate and pyruvate from L-glutamate: step 1/4. Catalyzes the carbon skeleton rearrangement of L-glutamate to L-threo-3-methylaspartate ((2S,3S)-3-methylaspartate). In Clostridium tetanomorphum, this protein is Glutamate mutase sigma subunit.